Here is a 124-residue protein sequence, read N- to C-terminus: Large ribosomal subunit protein eL22z (124 aa).

Belongs to the eukaryotic ribosomal protein eL22 family.

The chain is Large ribosomal subunit protein eL22z (RPL22B) from Arabidopsis thaliana (Mouse-ear cress).